A 280-amino-acid polypeptide reads, in one-letter code: Dihydropteroate synthase (280 aa).

The Pterin-binding domain maps to 1 to 265; that stretch reads MSPAPVQVMG…DVRASVDAIK (265 aa). Asn13 provides a ligand contact to Mg(2+). Residues Asp86, Asn105, Asp177, Lys213, and 253-255 each bind (7,8-dihydropterin-6-yl)methyl diphosphate; that span reads RVH.

This sequence belongs to the DHPS family. As to quaternary structure, homodimer. The cofactor is Mg(2+).

It carries out the reaction (7,8-dihydropterin-6-yl)methyl diphosphate + 4-aminobenzoate = 7,8-dihydropteroate + diphosphate. It functions in the pathway cofactor biosynthesis; tetrahydrofolate biosynthesis; 7,8-dihydrofolate from 2-amino-4-hydroxy-6-hydroxymethyl-7,8-dihydropteridine diphosphate and 4-aminobenzoate: step 1/2. Its function is as follows. Catalyzes the condensation of para-aminobenzoate (pABA) with 6-hydroxymethyl-7,8-dihydropterin diphosphate (DHPt-PP) to form 7,8-dihydropteroate (H2Pte), the immediate precursor of folate derivatives. This Mycobacterium bovis (strain ATCC BAA-935 / AF2122/97) protein is Dihydropteroate synthase (folP1).